A 206-amino-acid polypeptide reads, in one-letter code: Putative NAD(P)H nitroreductase MhqN (206 aa).

FMN is bound by residues 11–13 (RRS), 68–70 (QYK), 157–158 (IG), Arg193, and Arg196.

It belongs to the nitroreductase family. Homodimer. The cofactor is FMN.

Its subcellular location is the cytoplasm. Functionally, putative nitroreductase that may contribute to the degradation of aromatic compounds. The chain is Putative NAD(P)H nitroreductase MhqN (mhqN) from Bacillus subtilis (strain 168).